The primary structure comprises 35 residues: Leukocyte cysteine proteinase inhibitor 2 (35 aa).

Residues 1 to 35 (LAGGLTEPRPADTEIQEIANKVKPQLEEKTNKKYD) are disordered. A compositionally biased stretch (basic and acidic residues) spans 24-35 (PQLEEKTNKKYD).

This sequence belongs to the cystatin family.

The protein localises to the cytoplasm. In terms of biological role, potent inhibitor of cathepsins L and S, and papain. In Sus scrofa (Pig), this protein is Leukocyte cysteine proteinase inhibitor 2.